We begin with the raw amino-acid sequence, 342 residues long: Dihydroorotase (342 aa).

Zn(2+) contacts are provided by His13 and His15. Substrate contacts are provided by residues 15–17 (HLR) and Asn41. Residues Lys98, His135, and His173 each coordinate Zn(2+). Residue Lys98 is modified to N6-carboxylysine. Substrate is bound at residue His135. Leu218 serves as a coordination point for substrate. Asp246 serves as a coordination point for Zn(2+). Asp246 is an active-site residue. Substrate-binding residues include His250 and Ala262.

It belongs to the metallo-dependent hydrolases superfamily. DHOase family. Class II DHOase subfamily. As to quaternary structure, homodimer. Zn(2+) serves as cofactor.

It catalyses the reaction (S)-dihydroorotate + H2O = N-carbamoyl-L-aspartate + H(+). It functions in the pathway pyrimidine metabolism; UMP biosynthesis via de novo pathway; (S)-dihydroorotate from bicarbonate: step 3/3. Catalyzes the reversible cyclization of carbamoyl aspartate to dihydroorotate. This chain is Dihydroorotase, found in Vibrio cholerae serotype O1 (strain ATCC 39315 / El Tor Inaba N16961).